Reading from the N-terminus, the 487-residue chain is Protein nucleotidyltransferase YdiU (487 aa).

Positions 90, 92, 93, 113, 125, 126, 176, and 183 each coordinate ATP. Asp252 acts as the Proton acceptor in catalysis. Residues Asn253 and Asp262 each coordinate Mg(2+). Asp262 is an ATP binding site.

The protein belongs to the SELO family. The cofactor is Mg(2+). Mn(2+) serves as cofactor.

It catalyses the reaction L-seryl-[protein] + ATP = 3-O-(5'-adenylyl)-L-seryl-[protein] + diphosphate. It carries out the reaction L-threonyl-[protein] + ATP = 3-O-(5'-adenylyl)-L-threonyl-[protein] + diphosphate. The catalysed reaction is L-tyrosyl-[protein] + ATP = O-(5'-adenylyl)-L-tyrosyl-[protein] + diphosphate. The enzyme catalyses L-histidyl-[protein] + UTP = N(tele)-(5'-uridylyl)-L-histidyl-[protein] + diphosphate. It catalyses the reaction L-seryl-[protein] + UTP = O-(5'-uridylyl)-L-seryl-[protein] + diphosphate. It carries out the reaction L-tyrosyl-[protein] + UTP = O-(5'-uridylyl)-L-tyrosyl-[protein] + diphosphate. Its function is as follows. Nucleotidyltransferase involved in the post-translational modification of proteins. It can catalyze the addition of adenosine monophosphate (AMP) or uridine monophosphate (UMP) to a protein, resulting in modifications known as AMPylation and UMPylation. In Pseudomonas fluorescens (strain SBW25), this protein is Protein nucleotidyltransferase YdiU.